Consider the following 268-residue polypeptide: 3-methyl-2-oxobutanoate hydroxymethyltransferase (268 aa).

Mg(2+) contacts are provided by Asp46 and Asp85. Residues Asp46–Ser47, Asp85, and Lys114 contribute to the 3-methyl-2-oxobutanoate site. Glu116 provides a ligand contact to Mg(2+). Glu183 (proton acceptor) is an active-site residue.

Belongs to the PanB family. As to quaternary structure, homodecamer; pentamer of dimers. The cofactor is Mg(2+).

The protein localises to the cytoplasm. The catalysed reaction is 3-methyl-2-oxobutanoate + (6R)-5,10-methylene-5,6,7,8-tetrahydrofolate + H2O = 2-dehydropantoate + (6S)-5,6,7,8-tetrahydrofolate. The protein operates within cofactor biosynthesis; coenzyme A biosynthesis. Functionally, catalyzes the reversible reaction in which hydroxymethyl group from 5,10-methylenetetrahydrofolate is transferred onto alpha-ketoisovalerate to form ketopantoate. This is 3-methyl-2-oxobutanoate hydroxymethyltransferase from Sulfolobus acidocaldarius (strain ATCC 33909 / DSM 639 / JCM 8929 / NBRC 15157 / NCIMB 11770).